The sequence spans 237 residues: MRQHVNPLSRFFQLPLELPAPHELFEHPNLPIHLDIGCARGFFLLELAAMQPERNHLGVEIRRPLVQAAQHDRDRQEQHNLHFLFCNANISLEAWMAALPPDQLQLVSIQFPDPWFKQRHRKRRVLQPALLLAIAAALHPGRHLFLQSDVLAVIEPMVALVELSNCFARPKDDPQPWRSSNPLPVATERERYVQEQGQPTYRVLFERTQAELPALRDLEMAWQQVDNSKDAAPTPHG.

Residues Asp-35, Glu-60, Asn-87, and Asp-113 each coordinate S-adenosyl-L-methionine. Residue Asp-113 is part of the active site. Residues Lys-117 and Asp-149 each contribute to the substrate site.

Belongs to the class I-like SAM-binding methyltransferase superfamily. TrmB family.

The enzyme catalyses guanosine(46) in tRNA + S-adenosyl-L-methionine = N(7)-methylguanosine(46) in tRNA + S-adenosyl-L-homocysteine. It participates in tRNA modification; N(7)-methylguanine-tRNA biosynthesis. Functionally, catalyzes the formation of N(7)-methylguanine at position 46 (m7G46) in tRNA. The chain is tRNA (guanine-N(7)-)-methyltransferase from Synechococcus sp. (strain CC9311).